The following is a 461-amino-acid chain: Cysteine--tRNA ligase (461 aa).

C29 contributes to the Zn(2+) binding site. The short motif at 31–41 is the 'HIGH' region element; the sequence is MTVYDFCHIGH. Positions 210, 235, and 239 each coordinate Zn(2+). The short motif at 267 to 271 is the 'KMSKS' region element; sequence KMSKS. K270 lines the ATP pocket.

This sequence belongs to the class-I aminoacyl-tRNA synthetase family. Monomer. Zn(2+) serves as cofactor.

The protein localises to the cytoplasm. The enzyme catalyses tRNA(Cys) + L-cysteine + ATP = L-cysteinyl-tRNA(Cys) + AMP + diphosphate. The chain is Cysteine--tRNA ligase from Stutzerimonas stutzeri (strain A1501) (Pseudomonas stutzeri).